The following is a 318-amino-acid chain: Pyrimidine-specific ribonucleoside hydrolase RihA (318 aa).

Residue His-240 is part of the active site.

It belongs to the IUNH family. RihA subfamily.

Its function is as follows. Hydrolyzes cytidine or uridine to ribose and cytosine or uracil, respectively. The sequence is that of Pyrimidine-specific ribonucleoside hydrolase RihA from Shewanella oneidensis (strain ATCC 700550 / JCM 31522 / CIP 106686 / LMG 19005 / NCIMB 14063 / MR-1).